The following is an 87-amino-acid chain: MRNIMKHGMSKYLFTIFFLFSNSYAFAACQDCVTISGQWVNLSEVGIVVGDYHYGVTKDNKKFLLTDGSVNKAEKALILGTKLYVDT.

The sequence is that of Putative protein p8 (8) from Acyrthosiphon pisum secondary endosymbiont phage 1 (Bacteriophage APSE-1).